A 118-amino-acid polypeptide reads, in one-letter code: UPF0102 protein CHY_1414 (118 aa).

It belongs to the UPF0102 family.

The chain is UPF0102 protein CHY_1414 from Carboxydothermus hydrogenoformans (strain ATCC BAA-161 / DSM 6008 / Z-2901).